A 136-amino-acid polypeptide reads, in one-letter code: Large-conductance mechanosensitive channel (136 aa).

The next 2 helical transmembrane spans lie at 10-30 and 76-96; these read FAMRGNVVDLAVGVIIGAAFG and GVFIQNVFDFLIVAFAIFMAI.

The protein belongs to the MscL family. As to quaternary structure, homopentamer.

Its subcellular location is the cell inner membrane. Functionally, channel that opens in response to stretch forces in the membrane lipid bilayer. May participate in the regulation of osmotic pressure changes within the cell. This chain is Large-conductance mechanosensitive channel, found in Escherichia coli O139:H28 (strain E24377A / ETEC).